Here is a 282-residue protein sequence, read N- to C-terminus: ATP synthase gamma chain (282 aa).

It belongs to the ATPase gamma chain family. As to quaternary structure, F-type ATPases have 2 components, CF(1) - the catalytic core - and CF(0) - the membrane proton channel. CF(1) has five subunits: alpha(3), beta(3), gamma(1), delta(1), epsilon(1). CF(0) has three main subunits: a, b and c.

It localises to the cell membrane. Functionally, produces ATP from ADP in the presence of a proton gradient across the membrane. The gamma chain is believed to be important in regulating ATPase activity and the flow of protons through the CF(0) complex. The protein is ATP synthase gamma chain of Clostridium botulinum (strain Langeland / NCTC 10281 / Type F).